We begin with the raw amino-acid sequence, 171 residues long: Co-chaperone protein HscB (171 aa).

The region spanning 2–74 (DYFTLFGLPA…LTRAEYLLSL (73 aa)) is the J domain.

This sequence belongs to the HscB family. In terms of assembly, interacts with HscA and stimulates its ATPase activity. Interacts with IscU.

Co-chaperone involved in the maturation of iron-sulfur cluster-containing proteins. Seems to help targeting proteins to be folded toward HscA. This Citrobacter koseri (strain ATCC BAA-895 / CDC 4225-83 / SGSC4696) protein is Co-chaperone protein HscB.